A 242-amino-acid chain; its full sequence is DNA repair protein RecO (242 aa).

Belongs to the RecO family.

Functionally, involved in DNA repair and RecF pathway recombination. This chain is DNA repair protein RecO, found in Nitrosospira multiformis (strain ATCC 25196 / NCIMB 11849 / C 71).